Reading from the N-terminus, the 332-residue chain is 5-dehydro-2-deoxygluconokinase 1 (332 aa).

This sequence belongs to the carbohydrate kinase PfkB family.

It catalyses the reaction 5-dehydro-2-deoxy-D-gluconate + ATP = 6-phospho-5-dehydro-2-deoxy-D-gluconate + ADP + H(+). It participates in polyol metabolism; myo-inositol degradation into acetyl-CoA; acetyl-CoA from myo-inositol: step 5/7. In terms of biological role, catalyzes the phosphorylation of 5-dehydro-2-deoxy-D-gluconate (2-deoxy-5-keto-D-gluconate or DKG) to 6-phospho-5-dehydro-2-deoxy-D-gluconate (DKGP). This chain is 5-dehydro-2-deoxygluconokinase 1, found in Bacillus cereus (strain ZK / E33L).